The chain runs to 310 residues: p-hydroxybenzoic acid efflux pump subunit AaeA (310 aa).

Residues 12–32 traverse the membrane as a helical segment; sequence AITLVLVILAFIAIFRAWVYY.

This sequence belongs to the membrane fusion protein (MFP) (TC 8.A.1) family.

It is found in the cell inner membrane. In terms of biological role, forms an efflux pump with AaeB. In Salmonella gallinarum (strain 287/91 / NCTC 13346), this protein is p-hydroxybenzoic acid efflux pump subunit AaeA.